The primary structure comprises 291 residues: 4-hydroxy-tetrahydrodipicolinate synthase (291 aa).

Residue T45 participates in pyruvate binding. The Proton donor/acceptor role is filled by Y133. K161 (schiff-base intermediate with substrate) is an active-site residue. Position 203 (I203) interacts with pyruvate.

The protein belongs to the DapA family. Homotetramer; dimer of dimers.

It is found in the cytoplasm. The enzyme catalyses L-aspartate 4-semialdehyde + pyruvate = (2S,4S)-4-hydroxy-2,3,4,5-tetrahydrodipicolinate + H2O + H(+). It functions in the pathway amino-acid biosynthesis; L-lysine biosynthesis via DAP pathway; (S)-tetrahydrodipicolinate from L-aspartate: step 3/4. Its function is as follows. Catalyzes the condensation of (S)-aspartate-beta-semialdehyde [(S)-ASA] and pyruvate to 4-hydroxy-tetrahydrodipicolinate (HTPA). This Teredinibacter turnerae (strain ATCC 39867 / T7901) protein is 4-hydroxy-tetrahydrodipicolinate synthase.